Consider the following 289-residue polypeptide: Pantothenate synthetase (289 aa).

Methionine 30–histidine 37 is an ATP binding site. The active-site Proton donor is histidine 37. Glutamine 61 provides a ligand contact to (R)-pantoate. Glutamine 61 contributes to the beta-alanine binding site. Glycine 147–aspartate 150 is a binding site for ATP. Glutamine 153 is a (R)-pantoate binding site. ATP is bound by residues valine 176 and cysteine 184–arginine 187.

Belongs to the pantothenate synthetase family. As to quaternary structure, homodimer.

It is found in the cytoplasm. It catalyses the reaction (R)-pantoate + beta-alanine + ATP = (R)-pantothenate + AMP + diphosphate + H(+). It functions in the pathway cofactor biosynthesis; (R)-pantothenate biosynthesis; (R)-pantothenate from (R)-pantoate and beta-alanine: step 1/1. Catalyzes the condensation of pantoate with beta-alanine in an ATP-dependent reaction via a pantoyl-adenylate intermediate. The polypeptide is Pantothenate synthetase (Allorhizobium ampelinum (strain ATCC BAA-846 / DSM 112012 / S4) (Agrobacterium vitis (strain S4))).